Here is a 424-residue protein sequence, read N- to C-terminus: L-glutamine:2-deoxy-scyllo-inosose aminotransferase (424 aa).

Lys-202 carries the N6-(pyridoxal phosphate)lysine modification.

This sequence belongs to the DegT/DnrJ/EryC1 family. L-glutamine:2-deoxy-scyllo-inosose/scyllo-inosose aminotransferase subfamily. Pyridoxal 5'-phosphate serves as cofactor.

It carries out the reaction 2-deoxy-L-scyllo-inosose + L-glutamine = 2-deoxy-scyllo-inosamine + 2-oxoglutaramate. It catalyses the reaction 3-amino-2,3-dideoxy-scyllo-inosose + L-glutamine = 2-deoxystreptamine + 2-oxoglutaramate. It functions in the pathway metabolic intermediate biosynthesis; 2-deoxystreptamine biosynthesis; 2-deoxystreptamine from D-glucose 6-phosphate: step 2/4. Its pathway is metabolic intermediate biosynthesis; 2-deoxystreptamine biosynthesis; 2-deoxystreptamine from D-glucose 6-phosphate: step 4/4. It participates in antibiotic biosynthesis; ribostamycin biosynthesis. Catalyzes the PLP-dependent transamination of 2-deoxy-scyllo-inosose (2-DOI) to form 2-deoxy-scyllo-inosamine (2-DOIA) using L-glutamine as the amino donor. Also catalyzes the transamination of 3-amino-2,3-dideoxy-scyllo-inosose (keto-2-DOIA) into 2-deoxystreptamine (2-DOS). The chain is L-glutamine:2-deoxy-scyllo-inosose aminotransferase (rbmB) from Streptomyces ribosidificus.